A 172-amino-acid polypeptide reads, in one-letter code: NAD(P)H-quinone oxidoreductase subunit I, chloroplastic (172 aa).

4Fe-4S ferredoxin-type domains lie at 55-84 and 95-124; these read GRIHFEFDKCIACEVCVRVCPIDLPVVDWK and LNYSIDFGICIFCGNCVEYCPTNCLSMTEE. Cys-64, Cys-67, Cys-70, Cys-74, Cys-104, Cys-107, Cys-110, and Cys-114 together coordinate [4Fe-4S] cluster.

This sequence belongs to the complex I 23 kDa subunit family. As to quaternary structure, NDH is composed of at least 16 different subunits, 5 of which are encoded in the nucleus. It depends on [4Fe-4S] cluster as a cofactor.

The protein resides in the plastid. Its subcellular location is the chloroplast thylakoid membrane. It catalyses the reaction a plastoquinone + NADH + (n+1) H(+)(in) = a plastoquinol + NAD(+) + n H(+)(out). The catalysed reaction is a plastoquinone + NADPH + (n+1) H(+)(in) = a plastoquinol + NADP(+) + n H(+)(out). NDH shuttles electrons from NAD(P)H:plastoquinone, via FMN and iron-sulfur (Fe-S) centers, to quinones in the photosynthetic chain and possibly in a chloroplast respiratory chain. The immediate electron acceptor for the enzyme in this species is believed to be plastoquinone. Couples the redox reaction to proton translocation, and thus conserves the redox energy in a proton gradient. The protein is NAD(P)H-quinone oxidoreductase subunit I, chloroplastic of Arabidopsis thaliana (Mouse-ear cress).